The chain runs to 453 residues: Ribosomal protein uS12 methylthiotransferase RimO (453 aa).

The MTTase N-terminal domain maps to 3–118 (KKVGIISLGC…IAKVIEEFYS (116 aa)). [4Fe-4S] cluster-binding residues include cysteine 12, cysteine 48, cysteine 81, cysteine 162, cysteine 166, and cysteine 169. A Radical SAM core domain is found at 148-378 (STNSGYAYLK…MQLQKEIVQR (231 aa)). A TRAM domain is found at 381-449 (ESRLEKVYKT…DYDLIGEVIN (69 aa)).

Belongs to the methylthiotransferase family. RimO subfamily. Requires [4Fe-4S] cluster as cofactor.

It is found in the cytoplasm. It carries out the reaction L-aspartate(89)-[ribosomal protein uS12]-hydrogen + (sulfur carrier)-SH + AH2 + 2 S-adenosyl-L-methionine = 3-methylsulfanyl-L-aspartate(89)-[ribosomal protein uS12]-hydrogen + (sulfur carrier)-H + 5'-deoxyadenosine + L-methionine + A + S-adenosyl-L-homocysteine + 2 H(+). Functionally, catalyzes the methylthiolation of an aspartic acid residue of ribosomal protein uS12. The chain is Ribosomal protein uS12 methylthiotransferase RimO from Acetivibrio thermocellus (strain ATCC 27405 / DSM 1237 / JCM 9322 / NBRC 103400 / NCIMB 10682 / NRRL B-4536 / VPI 7372) (Clostridium thermocellum).